A 519-amino-acid polypeptide reads, in one-letter code: Cytochrome P450 4A11 (519 aa).

The propeptide occupies 1–4; that stretch reads MSVS. Glutamate 321 contributes to the heme binding site. Serine 440 is subject to Phosphoserine. Residue cysteine 457 coordinates heme.

The protein belongs to the cytochrome P450 family. The cofactor is heme. In terms of tissue distribution, expressed in liver. Expressed in S2 and S3 segments of proximal tubules in cortex and outer medulla of kidney.

Its subcellular location is the endoplasmic reticulum membrane. The protein resides in the microsome membrane. It catalyses the reaction an organic molecule + reduced [NADPH--hemoprotein reductase] + O2 = an alcohol + oxidized [NADPH--hemoprotein reductase] + H2O + H(+). The enzyme catalyses an omega-methyl-long-chain fatty acid + reduced [NADPH--hemoprotein reductase] + O2 = an omega-hydroxy-long-chain fatty acid + oxidized [NADPH--hemoprotein reductase] + H2O + H(+). The catalysed reaction is dodecanoate + reduced [NADPH--hemoprotein reductase] + O2 = 12-hydroxydodecanoate + oxidized [NADPH--hemoprotein reductase] + H2O + H(+). It carries out the reaction tetradecanoate + reduced [NADPH--hemoprotein reductase] + O2 = 14-hydroxytetradecanoate + oxidized [NADPH--hemoprotein reductase] + H2O + H(+). It catalyses the reaction hexadecanoate + reduced [NADPH--hemoprotein reductase] + O2 = 16-hydroxyhexadecanoate + oxidized [NADPH--hemoprotein reductase] + H2O + H(+). The enzyme catalyses (9Z)-octadecenoate + reduced [NADPH--hemoprotein reductase] + O2 = 18-hydroxy-(9Z)-octadecenoate + oxidized [NADPH--hemoprotein reductase] + H2O + H(+). The catalysed reaction is (5Z,8Z,11Z,14Z)-eicosatetraenoate + reduced [NADPH--hemoprotein reductase] + O2 = 20-hydroxy-(5Z,8Z,11Z,14Z)-eicosatetraenoate + oxidized [NADPH--hemoprotein reductase] + H2O + H(+). It carries out the reaction 22-hydroxydocosanoate + reduced [NADPH--hemoprotein reductase] + O2 = 22-oxodocosanoate + oxidized [NADPH--hemoprotein reductase] + 2 H2O + H(+). It catalyses the reaction 22-oxodocosanoate + reduced [NADPH--hemoprotein reductase] + O2 = docosanedioate + oxidized [NADPH--hemoprotein reductase] + H2O + 2 H(+). The enzyme catalyses (9R,10S)-epoxy-octadecanoate + reduced [NADPH--hemoprotein reductase] + O2 = 18-hydroxy-(9R,10S)-epoxy-octadecanoate + oxidized [NADPH--hemoprotein reductase] + H2O + H(+). The catalysed reaction is 3-hydroxyhexadecanoate + reduced [NADPH--hemoprotein reductase] + O2 = 3,16-dihydroxyhexadecanoate + oxidized [NADPH--hemoprotein reductase] + H2O + H(+). It functions in the pathway lipid metabolism; arachidonate metabolism. Its pathway is lipid metabolism; oxylipin biosynthesis. Activated by cytochrome b5. Its function is as follows. A cytochrome P450 monooxygenase involved in the metabolism of fatty acids and their oxygenated derivatives (oxylipins). Mechanistically, uses molecular oxygen inserting one oxygen atom into a substrate, and reducing the second into a water molecule, with two electrons provided by NADPH via cytochrome P450 reductase (CPR; NADPH-ferrihemoprotein reductase). Catalyzes predominantly the oxidation of the terminal carbon (omega-oxidation) of saturated and unsaturated fatty acids, the catalytic efficiency decreasing in the following order: dodecanoic &gt; tetradecanoic &gt; (9Z)-octadecenoic &gt; (9Z,12Z)-octadecadienoic &gt; hexadecanoic acid. Acts as a major omega-hydroxylase for dodecanoic (lauric) acid in liver. Participates in omega-hydroxylation of (5Z,8Z,11Z,14Z)-eicosatetraenoic acid (arachidonate) to 20-hydroxyeicosatetraenoic acid (20-HETE), a signaling molecule acting both as vasoconstrictive and natriuretic with overall effect on arterial blood pressure. Can also catalyze the oxidation of the penultimate carbon (omega-1 oxidation) of fatty acids with lower efficiency. May contribute to the degradation of saturated very long-chain fatty acids (VLCFAs) such as docosanoic acid, by catalyzing successive omega-oxidations to the corresponding dicarboxylic acid, thereby initiating chain shortening. Omega-hydroxylates (9R,10S)-epoxy-octadecanoate stereoisomer. Plays a minor role in omega-oxidation of long-chain 3-hydroxy fatty acids. Has little activity toward prostaglandins A1 and E1. This is Cytochrome P450 4A11 from Homo sapiens (Human).